A 79-amino-acid chain; its full sequence is Small ribosomal subunit protein uS17 (79 aa).

It belongs to the universal ribosomal protein uS17 family. Part of the 30S ribosomal subunit.

In terms of biological role, one of the primary rRNA binding proteins, it binds specifically to the 5'-end of 16S ribosomal RNA. This is Small ribosomal subunit protein uS17 from Bartonella quintana (strain Toulouse) (Rochalimaea quintana).